Reading from the N-terminus, the 287-residue chain is Phycobilisome 32.1 kDa linker polypeptide, phycocyanin-associated, rod (287 aa).

A PBS-linker domain is found at 2–180 (AITAAASRLG…LYRGYANSDR (179 aa)). Positions 235-287 (GRVYRIEVAGIRQPGYPGVRRSSTAFLVPYEQLSAKMQQLQRTGARIISVNPA) constitute a CpcD-like domain.

Belongs to the phycobilisome linker protein family.

It is found in the cellular thylakoid membrane. In terms of biological role, rod linker protein, associated with phycocyanin. Linker polypeptides determine the state of aggregation and the location of the disk-shaped phycobiliprotein units within the phycobilisome and modulate their spectroscopic properties in order to mediate a directed and optimal energy transfer. In Thermosynechococcus vestitus (strain NIES-2133 / IAM M-273 / BP-1), this protein is Phycobilisome 32.1 kDa linker polypeptide, phycocyanin-associated, rod (cpcC).